The chain runs to 507 residues: Histidine ammonia-lyase (507 aa).

The segment at residues 141-143 (ASG) is a cross-link (5-imidazolinone (Ala-Gly)). At S142 the chain carries 2,3-didehydroalanine (Ser).

The protein belongs to the PAL/histidase family. In terms of processing, contains an active site 4-methylidene-imidazol-5-one (MIO), which is formed autocatalytically by cyclization and dehydration of residues Ala-Ser-Gly.

The protein localises to the cytoplasm. It catalyses the reaction L-histidine = trans-urocanate + NH4(+). It functions in the pathway amino-acid degradation; L-histidine degradation into L-glutamate; N-formimidoyl-L-glutamate from L-histidine: step 1/3. This Burkholderia vietnamiensis (strain G4 / LMG 22486) (Burkholderia cepacia (strain R1808)) protein is Histidine ammonia-lyase.